The chain runs to 214 residues: Pyridoxine/pyridoxamine 5'-phosphate oxidase (214 aa).

Residues 9 to 12 (RRSY) and lysine 68 each bind substrate. Residues 63 to 68 (RVVLLK), 78 to 79 (YT), lysine 85, and glutamine 107 contribute to the FMN site. Substrate-binding residues include tyrosine 125, arginine 129, and serine 133. Residues 142–143 (QS) and tryptophan 187 contribute to the FMN site. 193–195 (RLH) serves as a coordination point for substrate. An FMN-binding site is contributed by arginine 197.

Belongs to the pyridoxamine 5'-phosphate oxidase family. In terms of assembly, homodimer. FMN serves as cofactor.

It catalyses the reaction pyridoxamine 5'-phosphate + O2 + H2O = pyridoxal 5'-phosphate + H2O2 + NH4(+). The catalysed reaction is pyridoxine 5'-phosphate + O2 = pyridoxal 5'-phosphate + H2O2. It functions in the pathway cofactor metabolism; pyridoxal 5'-phosphate salvage; pyridoxal 5'-phosphate from pyridoxamine 5'-phosphate: step 1/1. The protein operates within cofactor metabolism; pyridoxal 5'-phosphate salvage; pyridoxal 5'-phosphate from pyridoxine 5'-phosphate: step 1/1. Catalyzes the oxidation of either pyridoxine 5'-phosphate (PNP) or pyridoxamine 5'-phosphate (PMP) into pyridoxal 5'-phosphate (PLP). The protein is Pyridoxine/pyridoxamine 5'-phosphate oxidase of Christiangramia forsetii (strain DSM 17595 / CGMCC 1.15422 / KT0803) (Gramella forsetii).